A 73-amino-acid chain; its full sequence is MWERERKKFLEDIRKKSLQELEKLLDELKLELTRLRFKKQVQGLENPMEMRKVKRNIARVLTVIREKQLRGEG.

The protein belongs to the universal ribosomal protein uL29 family.

The chain is Large ribosomal subunit protein uL29 (rpmC) from Aquifex aeolicus (strain VF5).